Here is a 301-residue protein sequence, read N- to C-terminus: Aldose reductase (301 aa).

11–20 is an NADP(+) binding site; it reads GKEIPTVGLG. Residue Y51 is the Proton donor of the active site. Residue H111 participates in substrate binding. An NADP(+)-binding site is contributed by 209–266; the sequence is SSLGSAPGSSAKVRDDKTIKAIAKKYGCAPSQIILSYITAQGICVIPKSRSKEHLREN.

This sequence belongs to the aldo/keto reductase family.

It localises to the cytoplasm. The catalysed reaction is an alditol + NAD(+) = an aldose + NADH + H(+). It catalyses the reaction an alditol + NADP(+) = an aldose + NADPH + H(+). In terms of biological role, catalyzes the NADPH-dependent reduction of a wide variety of carbonyl-containing compounds to their corresponding alcohols with a broad range of catalytic efficiencies. The chain is Aldose reductase from Encephalitozoon cuniculi (strain GB-M1) (Microsporidian parasite).